A 215-amino-acid chain; its full sequence is Nucleoside triphosphate pyrophosphatase (215 aa).

The active-site Proton acceptor is the Asp-77.

This sequence belongs to the Maf family. A divalent metal cation serves as cofactor.

The protein localises to the cytoplasm. It catalyses the reaction a ribonucleoside 5'-triphosphate + H2O = a ribonucleoside 5'-phosphate + diphosphate + H(+). The enzyme catalyses a 2'-deoxyribonucleoside 5'-triphosphate + H2O = a 2'-deoxyribonucleoside 5'-phosphate + diphosphate + H(+). Its function is as follows. Nucleoside triphosphate pyrophosphatase. May have a dual role in cell division arrest and in preventing the incorporation of modified nucleotides into cellular nucleic acids. The sequence is that of Nucleoside triphosphate pyrophosphatase from Rickettsia peacockii (strain Rustic).